The sequence spans 241 residues: Urease accessory protein UreF (241 aa).

This sequence belongs to the UreF family. In terms of assembly, ureD, UreF and UreG form a complex that acts as a GTP-hydrolysis-dependent molecular chaperone, activating the urease apoprotein by helping to assemble the nickel containing metallocenter of UreC. The UreE protein probably delivers the nickel.

It is found in the cytoplasm. Functionally, required for maturation of urease via the functional incorporation of the urease nickel metallocenter. In Rhodopseudomonas palustris (strain BisB18), this protein is Urease accessory protein UreF.